A 221-amino-acid polypeptide reads, in one-letter code: Cutinase 3 (221 aa).

The first 17 residues, M1–A17, serve as a signal peptide directing secretion. Disulfide bonds link C44–C122 and C70–C84. The active-site Nucleophile is S133. Cysteines 184 and 191 form a disulfide. The active site involves D188. Catalysis depends on H201, which acts as the Proton donor/acceptor.

It belongs to the cutinase family.

Its subcellular location is the secreted. The catalysed reaction is cutin + H2O = cutin monomers.. Its function is as follows. Catalyzes the hydrolysis of complex carboxylic polyesters found in the cell wall of plants. Degrades cutin, a macromolecule that forms the structure of the plant cuticle. Also degrades suberin, a specialized macromolecule found in the cell wall of various plant tissues. This is Cutinase 3 from Emericella nidulans (strain FGSC A4 / ATCC 38163 / CBS 112.46 / NRRL 194 / M139) (Aspergillus nidulans).